Reading from the N-terminus, the 901-residue chain is Probable inorganic carbon transporter subunit DabA (901 aa).

Positions 424, 426, 606, and 621 each coordinate Zn(2+).

This sequence belongs to the inorganic carbon transporter (TC 9.A.2) DabA family. Forms a complex with DabB. Requires Zn(2+) as cofactor.

It localises to the cell membrane. Its function is as follows. Part of an energy-coupled inorganic carbon pump. The chain is Probable inorganic carbon transporter subunit DabA from Staphylococcus aureus (strain MRSA252).